Consider the following 349-residue polypeptide: Anthranilate phosphoribosyltransferase (349 aa).

Residues glycine 94, 97–98 (GD), threonine 102, 104–107 (NIST), 122–130 (KHGNRSVSS), and serine 134 contribute to the 5-phospho-alpha-D-ribose 1-diphosphate site. Glycine 94 is a binding site for anthranilate. Serine 106 contacts Mg(2+). Asparagine 125 is an anthranilate binding site. Arginine 180 lines the anthranilate pocket. Positions 239 and 240 each coordinate Mg(2+).

It belongs to the anthranilate phosphoribosyltransferase family. In terms of assembly, homodimer. Requires Mg(2+) as cofactor.

The catalysed reaction is N-(5-phospho-beta-D-ribosyl)anthranilate + diphosphate = 5-phospho-alpha-D-ribose 1-diphosphate + anthranilate. The protein operates within amino-acid biosynthesis; L-tryptophan biosynthesis; L-tryptophan from chorismate: step 2/5. In terms of biological role, catalyzes the transfer of the phosphoribosyl group of 5-phosphorylribose-1-pyrophosphate (PRPP) to anthranilate to yield N-(5'-phosphoribosyl)-anthranilate (PRA). This chain is Anthranilate phosphoribosyltransferase, found in Trichlorobacter lovleyi (strain ATCC BAA-1151 / DSM 17278 / SZ) (Geobacter lovleyi).